We begin with the raw amino-acid sequence, 229 residues long: GTP cyclohydrolase 1 (229 aa).

Positions 1 to 21 (MDAKIKPLRAGKSADARTDFQ) are disordered. Zn(2+) is bound by residues Cys118, His121, and Cys189.

This sequence belongs to the GTP cyclohydrolase I family. Toroid-shaped homodecamer, composed of two pentamers of five dimers.

The enzyme catalyses GTP + H2O = 7,8-dihydroneopterin 3'-triphosphate + formate + H(+). The protein operates within cofactor biosynthesis; 7,8-dihydroneopterin triphosphate biosynthesis; 7,8-dihydroneopterin triphosphate from GTP: step 1/1. This chain is GTP cyclohydrolase 1, found in Rhodopseudomonas palustris (strain HaA2).